We begin with the raw amino-acid sequence, 640 residues long: 2-hydroxyacyl-CoA lyase 2 (640 aa).

Residues 2–22 traverse the membrane as a helical segment; sequence VLFLIIAAIIIGLLLWKWLDV. Residue Glu102 participates in thiamine diphosphate binding. The tract at residues 477-557 is thiamine pyrophosphate binding; it reads DFVGSAAYIV…VIGIVGNDAC (81 aa). The Mg(2+) site is built by Asp528 and Asn554.

This sequence belongs to the TPP enzyme family. It depends on Mg(2+) as a cofactor. The cofactor is thiamine diphosphate.

The protein resides in the endoplasmic reticulum membrane. It carries out the reaction 2-hydroxyoctadecanoyl-CoA = heptadecanal + formyl-CoA. The catalysed reaction is (2R)-hydroxyhexadecanoyl-CoA = pentadecanal + formyl-CoA. Functionally, endoplasmic reticulum 2-OH acyl-CoA lyase involved in the cleavage (C1 removal) reaction in the fatty acid alpha-oxydation in a thiamine pyrophosphate (TPP)-dependent manner. This Caenorhabditis elegans protein is 2-hydroxyacyl-CoA lyase 2.